The following is a 346-amino-acid chain: Anthranilate phosphoribosyltransferase (346 aa).

Residues Gly81, 84–85 (GD), 91–94 (NVST), 109–117 (KHGNRSVSS), and Ser121 each bind 5-phospho-alpha-D-ribose 1-diphosphate. Position 81 (Gly81) interacts with anthranilate. Ser93 contributes to the Mg(2+) binding site. An anthranilate-binding site is contributed by Asn112. Residue Arg167 participates in anthranilate binding. 2 residues coordinate Mg(2+): Asp226 and Glu227.

It belongs to the anthranilate phosphoribosyltransferase family. As to quaternary structure, homodimer. It depends on Mg(2+) as a cofactor.

The catalysed reaction is N-(5-phospho-beta-D-ribosyl)anthranilate + diphosphate = 5-phospho-alpha-D-ribose 1-diphosphate + anthranilate. Its pathway is amino-acid biosynthesis; L-tryptophan biosynthesis; L-tryptophan from chorismate: step 2/5. Its function is as follows. Catalyzes the transfer of the phosphoribosyl group of 5-phosphorylribose-1-pyrophosphate (PRPP) to anthranilate to yield N-(5'-phosphoribosyl)-anthranilate (PRA). This is Anthranilate phosphoribosyltransferase from Hahella chejuensis (strain KCTC 2396).